A 128-amino-acid polypeptide reads, in one-letter code: Large ribosomal subunit protein bL12c (128 aa).

This sequence belongs to the bacterial ribosomal protein bL12 family. As to quaternary structure, homodimer. Part of the ribosomal stalk of the 50S ribosomal subunit. Forms a multimeric L10(L12)X complex, where L10 forms an elongated spine to which 2 to 4 L12 dimers bind in a sequential fashion. Binds GTP-bound translation factors.

Its subcellular location is the plastid. The protein localises to the chloroplast. In terms of biological role, forms part of the ribosomal stalk which helps the ribosome interact with GTP-bound translation factors. Is thus essential for accurate translation. The sequence is that of Large ribosomal subunit protein bL12c from Phaeodactylum tricornutum (strain CCAP 1055/1).